A 289-amino-acid polypeptide reads, in one-letter code: ATP synthase gamma chain (289 aa).

Belongs to the ATPase gamma chain family. As to quaternary structure, F-type ATPases have 2 components, CF(1) - the catalytic core - and CF(0) - the membrane proton channel. CF(1) has five subunits: alpha(3), beta(3), gamma(1), delta(1), epsilon(1). CF(0) has three main subunits: a, b and c.

Its subcellular location is the cell inner membrane. Functionally, produces ATP from ADP in the presence of a proton gradient across the membrane. The gamma chain is believed to be important in regulating ATPase activity and the flow of protons through the CF(0) complex. This Haemophilus influenzae (strain PittEE) protein is ATP synthase gamma chain.